A 628-amino-acid polypeptide reads, in one-letter code: UvrABC system protein C (628 aa).

One can recognise a GIY-YIG domain in the interval 21-100 (TGPGIYQFKN…IKELKPRYNV (80 aa)). Residues 214–249 (AGLLKELHEKMLTAAAELRFEEAAELKMQLQSLRRY) form the UVR domain.

The protein belongs to the UvrC family. In terms of assembly, interacts with UvrB in an incision complex.

It is found in the cytoplasm. In terms of biological role, the UvrABC repair system catalyzes the recognition and processing of DNA lesions. UvrC both incises the 5' and 3' sides of the lesion. The N-terminal half is responsible for the 3' incision and the C-terminal half is responsible for the 5' incision. The protein is UvrABC system protein C of Chlorobium luteolum (strain DSM 273 / BCRC 81028 / 2530) (Pelodictyon luteolum).